The chain runs to 406 residues: Putative phosphate permease TK2061 (406 aa).

Transmembrane regions (helical) follow at residues 2 to 22 (AVMD…AWAI), 45 to 65 (AVLI…KSVT), 82 to 102 (TVLI…LVIA), 115 to 135 (IIGG…VNWG), 139 to 159 (QVVL…FLVF), 182 to 202 (FWIG…VLHG), 208 to 228 (GVLF…FLTL), 288 to 308 (VPVP…GVAT), 324 to 346 (LTNT…ASWL), and 385 to 405 (FVTV…LMIV).

It belongs to the inorganic phosphate transporter (PiT) (TC 2.A.20) family.

Its subcellular location is the cell membrane. Its function is as follows. Potential transporter for phosphate. The sequence is that of Putative phosphate permease TK2061 from Thermococcus kodakarensis (strain ATCC BAA-918 / JCM 12380 / KOD1) (Pyrococcus kodakaraensis (strain KOD1)).